The chain runs to 251 residues: Triosephosphate isomerase (251 aa).

N9–K11 is a substrate binding site. The active-site Electrophile is the H95. Catalysis depends on E167, which acts as the Proton acceptor. Substrate-binding positions include G173, S212, and G233 to G234.

It belongs to the triosephosphate isomerase family. In terms of assembly, homodimer.

The protein localises to the cytoplasm. It carries out the reaction D-glyceraldehyde 3-phosphate = dihydroxyacetone phosphate. The protein operates within carbohydrate biosynthesis; gluconeogenesis. It participates in carbohydrate degradation; glycolysis; D-glyceraldehyde 3-phosphate from glycerone phosphate: step 1/1. Its function is as follows. Involved in the gluconeogenesis. Catalyzes stereospecifically the conversion of dihydroxyacetone phosphate (DHAP) to D-glyceraldehyde-3-phosphate (G3P). The sequence is that of Triosephosphate isomerase from Ectopseudomonas mendocina (strain ymp) (Pseudomonas mendocina).